Here is a 312-residue protein sequence, read N- to C-terminus: Ribosomal protein L11 methyltransferase (312 aa).

4 residues coordinate S-adenosyl-L-methionine: Thr-163, Gly-184, Asp-206, and Asn-248.

Belongs to the methyltransferase superfamily. PrmA family.

It is found in the cytoplasm. The enzyme catalyses L-lysyl-[protein] + 3 S-adenosyl-L-methionine = N(6),N(6),N(6)-trimethyl-L-lysyl-[protein] + 3 S-adenosyl-L-homocysteine + 3 H(+). Functionally, methylates ribosomal protein L11. This Clostridium kluyveri (strain NBRC 12016) protein is Ribosomal protein L11 methyltransferase.